The sequence spans 241 residues: Probable GTP-binding protein EngB (241 aa).

In terms of domain architecture, EngB-type G spans 56 to 240; it reads GPVEIAFAGR…RAAIALLLKE (185 aa). Residues 64–71, 91–95, 118–121, 185–188, and 219–221 each bind GTP; these read GRSNVGKS, GRTQE, DMPG, TKID, and TSS. Mg(2+) contacts are provided by serine 71 and threonine 93.

It belongs to the TRAFAC class TrmE-Era-EngA-EngB-Septin-like GTPase superfamily. EngB GTPase family. Mg(2+) serves as cofactor.

In terms of biological role, necessary for normal cell division and for the maintenance of normal septation. This Brucella suis biovar 1 (strain 1330) protein is Probable GTP-binding protein EngB.